A 429-amino-acid chain; its full sequence is Ribosomal RNA small subunit methyltransferase B (429 aa).

Residues 254–260, Asp277, Asp303, and Asp322 each bind S-adenosyl-L-methionine; that span reads CAAPGGK. The active-site Nucleophile is Cys375.

This sequence belongs to the class I-like SAM-binding methyltransferase superfamily. RsmB/NOP family.

The protein localises to the cytoplasm. The catalysed reaction is cytidine(967) in 16S rRNA + S-adenosyl-L-methionine = 5-methylcytidine(967) in 16S rRNA + S-adenosyl-L-homocysteine + H(+). Specifically methylates the cytosine at position 967 (m5C967) of 16S rRNA. The chain is Ribosomal RNA small subunit methyltransferase B from Photorhabdus laumondii subsp. laumondii (strain DSM 15139 / CIP 105565 / TT01) (Photorhabdus luminescens subsp. laumondii).